Consider the following 434-residue polypeptide: Histidinol dehydrogenase (434 aa).

The NAD(+) site is built by tyrosine 130, glutamine 192, and asparagine 215. Substrate is bound by residues serine 238, glutamine 260, and histidine 263. Zn(2+) contacts are provided by glutamine 260 and histidine 263. Active-site proton acceptor residues include glutamate 328 and histidine 329. Substrate-binding residues include histidine 329, aspartate 362, glutamate 416, and histidine 421. Aspartate 362 contacts Zn(2+). Residue histidine 421 coordinates Zn(2+).

The protein belongs to the histidinol dehydrogenase family. Zn(2+) serves as cofactor.

The enzyme catalyses L-histidinol + 2 NAD(+) + H2O = L-histidine + 2 NADH + 3 H(+). The protein operates within amino-acid biosynthesis; L-histidine biosynthesis; L-histidine from 5-phospho-alpha-D-ribose 1-diphosphate: step 9/9. Catalyzes the sequential NAD-dependent oxidations of L-histidinol to L-histidinaldehyde and then to L-histidine. The sequence is that of Histidinol dehydrogenase from Synechococcus sp. (strain ATCC 27144 / PCC 6301 / SAUG 1402/1) (Anacystis nidulans).